Consider the following 399-residue polypeptide: MTFKTLDDLTDIAGKRVLVRVDLNVPVKDGQVTDTTRIERVAPTIRELSEKGAKVVLLAHFGRPKGEPVADMSLKAIASAVEEILDQRVYFAADCIGDKAANAIAELNDGEVLLLENTRFHKGEEKNDSDFVTALAANGDIYVNDAFSAAHRAHASTEGLAHHLPAYAGRTMQAELEALEKGLGNPKRPVVAIVGGAKVSTKIDLLQNLVKKVDALVIGGGMANTFLAAQGVDVGKSLCEHDLAETAKAILAAASEAGCAIVLPVDGVVAREFKAGADNEVVDIKAIPADAMVLDVGPKSIEAINEWISRAETLVWNGPLGAFEIAPFDRATVAAAKHAAARTRAGSLVSVAGGGDTVAALNHAEVADDFTYVSTAGGAFLEWMEGKPLPGVDVLRQRN.

Substrate contacts are provided by residues 22–24 (DLN), Arg-37, 60–63 (HFGR), Arg-119, and Arg-152. Residues Lys-202, Glu-324, and 354 to 357 (GGDT) contribute to the ATP site.

This sequence belongs to the phosphoglycerate kinase family. As to quaternary structure, monomer.

It is found in the cytoplasm. The enzyme catalyses (2R)-3-phosphoglycerate + ATP = (2R)-3-phospho-glyceroyl phosphate + ADP. It functions in the pathway carbohydrate degradation; glycolysis; pyruvate from D-glyceraldehyde 3-phosphate: step 2/5. The sequence is that of Phosphoglycerate kinase from Rhizobium meliloti (strain 1021) (Ensifer meliloti).